The following is a 184-amino-acid chain: Elongation factor P (184 aa).

Belongs to the elongation factor P family.

It is found in the cytoplasm. It participates in protein biosynthesis; polypeptide chain elongation. Functionally, involved in peptide bond synthesis. Stimulates efficient translation and peptide-bond synthesis on native or reconstituted 70S ribosomes in vitro. Probably functions indirectly by altering the affinity of the ribosome for aminoacyl-tRNA, thus increasing their reactivity as acceptors for peptidyl transferase. In Albidiferax ferrireducens (strain ATCC BAA-621 / DSM 15236 / T118) (Rhodoferax ferrireducens), this protein is Elongation factor P.